A 193-amino-acid chain; its full sequence is MIQAILVFNNHGKPRLVRFYQRFPEEIQQQIVRETFHLVLKRDDNICNFLEGGSLIGGSDYKLIYRHYATLYFVFCVDSSESELGILDLIQVFVETLDKCFENVCELDLIFHMDKVHYILQEVVMGGMVLETNMNEIVAQIEAQNRLEKSEGGLSAAPARAVSAVKNINLPEMPRNINIGDLNIKVPNLSQFV.

Belongs to the adaptor complexes small subunit family. In terms of assembly, adaptor protein complex 3 (AP-3) is a heterotetramer composed of two large adaptins (delta-type subunit AP3D1 and beta-type subunit AP3B1 or AP3B2), a medium adaptin (mu-type subunit AP3M1 or AP3M2) and a small adaptin (sigma-type subunit APS1 or AP3S2). Interacts with AGAP1. AP-3 associates with the BLOC-1 complex.

The protein resides in the golgi apparatus. It is found in the cytoplasmic vesicle membrane. Functionally, part of the AP-3 complex, an adaptor-related complex which is not clathrin-associated. The complex is associated with the Golgi region as well as more peripheral structures. It facilitates the budding of vesicles from the Golgi membrane and may be directly involved in trafficking to lysosomes. In concert with the BLOC-1 complex, AP-3 is required to target cargos into vesicles assembled at cell bodies for delivery into neurites and nerve terminals. The chain is AP-3 complex subunit sigma-2 (AP3S2) from Bos taurus (Bovine).